Reading from the N-terminus, the 427-residue chain is Serine hydroxymethyltransferase (427 aa).

Residues L122 and 126–128 (GHL) contribute to the (6S)-5,6,7,8-tetrahydrofolate site. Position 231 is an N6-(pyridoxal phosphate)lysine (K231). (6S)-5,6,7,8-tetrahydrofolate is bound at residue 355-357 (SPF).

Belongs to the SHMT family. Homodimer. The cofactor is pyridoxal 5'-phosphate.

It is found in the cytoplasm. It catalyses the reaction (6R)-5,10-methylene-5,6,7,8-tetrahydrofolate + glycine + H2O = (6S)-5,6,7,8-tetrahydrofolate + L-serine. It functions in the pathway one-carbon metabolism; tetrahydrofolate interconversion. Its pathway is amino-acid biosynthesis; glycine biosynthesis; glycine from L-serine: step 1/1. Catalyzes the reversible interconversion of serine and glycine with tetrahydrofolate (THF) serving as the one-carbon carrier. This reaction serves as the major source of one-carbon groups required for the biosynthesis of purines, thymidylate, methionine, and other important biomolecules. Also exhibits THF-independent aldolase activity toward beta-hydroxyamino acids, producing glycine and aldehydes, via a retro-aldol mechanism. This is Serine hydroxymethyltransferase from Nostoc sp. (strain PCC 7120 / SAG 25.82 / UTEX 2576).